The sequence spans 439 residues: MLEQVRIQKMVNGGYGLAHLSNGKVVLVEGAYPGEEVLIKTYREKRDFSFGKVVSLLKESEDRIKPPCRYFGRCGGCHWMDVKYETQLRYKKEVLIDLFERSNLKVEVEDVEPSDLVFHYRTKMEFHFQGRKLGLKKRNSDFVIDIKDCEVAPEGTGEILNTVKEAVQVLNVPVYNWETRKGVLKHLVIRYAFSTDQFMVIFVTKTESFPWGRDLVRAVLKRFPKIHSIIHVMNSKDSVVLRGPYKTLYGEGVIVEEFDWERFQIPPTAFFQSNYSITSKLIDHVYREQALQGNEVVLDLYAGIGTFSVRTSFSAARVISVESSRVAVKAGKANANINSRKNIEYVEQDVLDFLKNYSGRADRIILDPPRSGAGPEVMKEIARLSPERIVYVSCDPSTLVRDLKVLVENGYSIVRVKPFDMFPQTYHVETAVTLVKGDR.

Positions 1–55 constitute a TRAM domain; that stretch reads MLEQVRIQKMVNGGYGLAHLSNGKVVLVEGAYPGEEVLIKTYREKRDFSFGKVVS. Positions 68, 74, 77, and 149 each coordinate [4Fe-4S] cluster. Positions 272, 301, 322, and 367 each coordinate S-adenosyl-L-methionine. Cysteine 394 acts as the Nucleophile in catalysis.

The protein belongs to the class I-like SAM-binding methyltransferase superfamily. RNA M5U methyltransferase family.

This is an uncharacterized protein from Thermotoga maritima (strain ATCC 43589 / DSM 3109 / JCM 10099 / NBRC 100826 / MSB8).